The primary structure comprises 256 residues: Acetylglutamate kinase (256 aa).

Substrate-binding positions include 40–41 (GG), R62, and N154.

It belongs to the acetylglutamate kinase family. ArgB subfamily.

Its subcellular location is the cytoplasm. It carries out the reaction N-acetyl-L-glutamate + ATP = N-acetyl-L-glutamyl 5-phosphate + ADP. It functions in the pathway amino-acid biosynthesis; L-arginine biosynthesis; N(2)-acetyl-L-ornithine from L-glutamate: step 2/4. Catalyzes the ATP-dependent phosphorylation of N-acetyl-L-glutamate. The sequence is that of Acetylglutamate kinase from Staphylococcus aureus (strain MRSA252).